Consider the following 206-residue polypeptide: Large ribosomal subunit protein mL62 (206 aa).

The N-terminal 29 residues, 1-29, are a transit peptide targeting the mitochondrion; sequence MAAARCLRWGLSRAEAWLLPPPTSCCHRA. Gln90 bears the N5-methylglutamine mark.

The protein belongs to the prokaryotic/mitochondrial release factor family. Mitochondrion-specific ribosomal protein mL62 subfamily. Component of the mitochondrial ribosome large subunit (39S) which comprises a 16S rRNA and about 50 distinct proteins. Methylation of glutamine in the GGQ triplet by HEMK1.

The protein localises to the mitochondrion. The catalysed reaction is an N-acyl-L-alpha-aminoacyl-tRNA + H2O = an N-acyl-L-amino acid + a tRNA + H(+). Its function is as follows. Essential peptidyl-tRNA hydrolase component of the mitochondrial large ribosomal subunit. Acts as a codon-independent translation release factor that has lost all stop codon specificity and directs the termination of translation in mitochondrion, possibly in case of abortive elongation. May be involved in the hydrolysis of peptidyl-tRNAs that have been prematurely terminated and thus in the recycling of stalled mitochondrial ribosomes. This is Large ribosomal subunit protein mL62 from Bos taurus (Bovine).